A 149-amino-acid polypeptide reads, in one-letter code: Large ribosomal subunit protein uL11 (149 aa).

It belongs to the universal ribosomal protein uL11 family. In terms of assembly, part of the ribosomal stalk of the 50S ribosomal subunit. Interacts with L10 and the large rRNA to form the base of the stalk. L10 forms an elongated spine to which L12 dimers bind in a sequential fashion forming a multimeric L10(L12)X complex. In terms of processing, one or more lysine residues are methylated.

Functionally, forms part of the ribosomal stalk which helps the ribosome interact with GTP-bound translation factors. The protein is Large ribosomal subunit protein uL11 of Methylorubrum extorquens (strain CM4 / NCIMB 13688) (Methylobacterium extorquens).